The chain runs to 195 residues: MPAETAPRVILASGSPRRRELLGNLGVPFEVVVSGEAEDSQETDPARLALELGQLKARAVAAQHPDAVVIAADTVVALGGTLLAKPADEAENAAFLRQQSGKTQQVYTGVCVISPAGEQSGVERTDVTFRALTEAEVTFYARSGEGLDKAGGYGIQGVGMALIERVEGDYSNIVGFPLALVLRLLRGAGVSAFGV.

D73 acts as the Proton acceptor in catalysis.

This sequence belongs to the Maf family. YhdE subfamily. The cofactor is a divalent metal cation.

The protein localises to the cytoplasm. The enzyme catalyses dTTP + H2O = dTMP + diphosphate + H(+). It carries out the reaction UTP + H2O = UMP + diphosphate + H(+). Its function is as follows. Nucleoside triphosphate pyrophosphatase that hydrolyzes dTTP and UTP. May have a dual role in cell division arrest and in preventing the incorporation of modified nucleotides into cellular nucleic acids. The chain is dTTP/UTP pyrophosphatase from Deinococcus radiodurans (strain ATCC 13939 / DSM 20539 / JCM 16871 / CCUG 27074 / LMG 4051 / NBRC 15346 / NCIMB 9279 / VKM B-1422 / R1).